Consider the following 400-residue polypeptide: Enoyl-[acyl-carrier-protein] reductase [NADH] (400 aa).

Residues 48–53, 74–75, 111–112, and 139–140 each bind NAD(+); these read GSSSGY, FE, DA, and LA. A substrate-binding site is contributed by Y225. Y235 serves as the catalytic Proton donor. NAD(+) is bound by residues K244 and 273 to 275; that span reads VVT.

It belongs to the TER reductase family. In terms of assembly, monomer.

It catalyses the reaction a 2,3-saturated acyl-[ACP] + NAD(+) = a (2E)-enoyl-[ACP] + NADH + H(+). The protein operates within lipid metabolism; fatty acid biosynthesis. Its function is as follows. Involved in the final reduction of the elongation cycle of fatty acid synthesis (FAS II). Catalyzes the reduction of a carbon-carbon double bond in an enoyl moiety that is covalently linked to an acyl carrier protein (ACP). This chain is Enoyl-[acyl-carrier-protein] reductase [NADH], found in Shewanella baltica (strain OS185).